A 465-amino-acid chain; its full sequence is Ribosomal protein uS12 methylthiotransferase RimO (465 aa).

One can recognise an MTTase N-terminal domain in the interval Met1–Pro117. Residues Cys10, Cys46, Cys80, Cys150, Cys154, and Cys157 each coordinate [4Fe-4S] cluster. Residues Ala136–Arg369 form the Radical SAM core domain. A TRAM domain is found at Arg371–Ala442.

Belongs to the methylthiotransferase family. RimO subfamily. [4Fe-4S] cluster is required as a cofactor.

The protein localises to the cytoplasm. The enzyme catalyses L-aspartate(89)-[ribosomal protein uS12]-hydrogen + (sulfur carrier)-SH + AH2 + 2 S-adenosyl-L-methionine = 3-methylsulfanyl-L-aspartate(89)-[ribosomal protein uS12]-hydrogen + (sulfur carrier)-H + 5'-deoxyadenosine + L-methionine + A + S-adenosyl-L-homocysteine + 2 H(+). Functionally, catalyzes the methylthiolation of an aspartic acid residue of ribosomal protein uS12. In Solibacter usitatus (strain Ellin6076), this protein is Ribosomal protein uS12 methylthiotransferase RimO.